The chain runs to 432 residues: Adenosylhomocysteinase (432 aa).

Ser-2 is modified (N-acetylserine). Substrate-binding residues include Thr-57, Asp-131, and Glu-156. Ser-183 is modified (phosphoserine). An NAD binding region spans residues 183–350 (SVTKSKFDNL…EGRLVNLGCA (168 aa)). Substrate-binding residues include Lys-186 and Asp-190. Position 186 is an N6-(2-hydroxyisobutyryl)lysine (Lys-186). Tyr-193 is subject to Phosphotyrosine.

Belongs to the adenosylhomocysteinase family. As to quaternary structure, homotetramer. Interaction with AHCYL1. The cofactor is NAD(+).

The protein localises to the cytoplasm. Its subcellular location is the melanosome. It localises to the nucleus. It is found in the endoplasmic reticulum. It carries out the reaction S-adenosyl-L-homocysteine + H2O = L-homocysteine + adenosine. It functions in the pathway amino-acid biosynthesis; L-homocysteine biosynthesis; L-homocysteine from S-adenosyl-L-homocysteine: step 1/1. Catalyzes the hydrolysis of S-adenosyl-L-homocysteine to form adenosine and homocysteine. Binds copper ions. The polypeptide is Adenosylhomocysteinase (AHCY) (Macaca fascicularis (Crab-eating macaque)).